A 166-amino-acid chain; its full sequence is Putative transcriptional regulatory protein for hcr operon (166 aa).

The HTH marR-type domain occupies 1–155; it reads MRKHRGKPAN…LIGLLKRLYR (155 aa).

In terms of biological role, may be involved in the regulation of genes for 4-hydroxybenzoyl-CoA reductase. This is Putative transcriptional regulatory protein for hcr operon from Thauera aromatica.